A 209-amino-acid polypeptide reads, in one-letter code: Ubiquinone biosynthesis protein COQ4 homolog 2, mitochondrial (209 aa).

Residues His118, Asp119, His122, and Glu134 each contribute to the Zn(2+) site.

The protein belongs to the COQ4 family. Component of a multi-subunit COQ enzyme complex. It depends on Zn(2+) as a cofactor.

The protein localises to the mitochondrion inner membrane. The enzyme catalyses a 4-hydroxy-3-methoxy-5-(all-trans-polyprenyl)benzoate + H(+) = a 2-methoxy-6-(all-trans-polyprenyl)phenol + CO2. Its pathway is cofactor biosynthesis; ubiquinone biosynthesis. Lyase that catalyzes the C1-decarboxylation of 4-hydroxy-3-methoxy-5-(all-trans-polyprenyl)benzoic acid into 2-methoxy-6-(all-trans-polyprenyl)phenol during ubiquinone biosynthesis. This chain is Ubiquinone biosynthesis protein COQ4 homolog 2, mitochondrial, found in Paramecium tetraurelia.